The primary structure comprises 435 residues: Transmembrane protein 130 (435 aa).

Residues 1-24 (MAQAVWSRLGRILWLACLLPWAPA) form the signal peptide. Residues 25 to 339 (GVAAGLYELN…IQVWPSRIQP (315 aa)) lie on the Extracellular side of the membrane. Residues asparagine 34, asparagine 197, and asparagine 300 are each glycosylated (N-linked (GlcNAc...) asparagine). The PKD domain maps to 147–233 (WPSSYLTKTV…AVKQKTGDFS (87 aa)). The chain crosses the membrane as a helical span at residues 340–360 (AVFAFPCATLITVMLAFIMYM). Topologically, residues 361–435 (TLRNATQQKD…LYKSVKTYTV (75 aa)) are cytoplasmic.

Its subcellular location is the golgi apparatus membrane. The sequence is that of Transmembrane protein 130 (TMEM130) from Homo sapiens (Human).